Consider the following 201-residue polypeptide: Ras-related protein Rab-1B (201 aa).

An N-acetylmethionine modification is found at Met-1. Ser-17, Gly-18, Val-19, Gly-20, Lys-21, Ser-22, Cys-23, Tyr-33, Thr-34, Glu-35, Ser-36, Ser-39, and Thr-40 together coordinate GTP. Ser-22 contacts Mg(2+). The Switch 1 motif lies at Asp-30–Phe-45. Mg(2+)-binding residues include Thr-40 and Asp-63. The tract at residues Thr-64–Gly-83 is switch 2 region; required for interaction with REP1/CHM. Residues Ala-65–Gly-80 carry the Switch 2 motif. The GTP site is built by Gly-66, Asn-121, Lys-122, Asp-124, Ser-151, Ala-152, and Lys-153. Residues Gly-174–Cys-201 form a disordered region. S-geranylgeranyl cysteine attachment occurs at residues Cys-200 and Cys-201. Position 201 is a cysteine methyl ester (Cys-201).

Belongs to the small GTPase superfamily. Rab family. As to quaternary structure, interacts with MICAL1 and MICAL2. Interacts (GTP-bound form) with MICALCL, MICAL1 and MILCAL3. Interacts with GDI1; the interaction requires the GDP-bound state. Interacts with CHM/REP1; the interaction requires the GDP-bound form and is necessary for prenylation by GGTase II. Interacts with RabGAP TBC1D20. Interacts (in GDP-bound form) with lipid phosphatase MTMR6 (via GRAM domain); the interaction regulates MTMR6 recruitment to the endoplasmic reticulum-Golgi intermediate compartment. Interacts (in GDP-bound form) with lipid phosphatase MTMR7. Requires Mg(2+) as cofactor. In terms of processing, prenylated; by GGTase II, only after interaction of the substrate with Rab escort protein 1 (REP1).

The protein resides in the cytoplasm. Its subcellular location is the membrane. It is found in the preautophagosomal structure membrane. It localises to the perinuclear region. It carries out the reaction GTP + H2O = GDP + phosphate + H(+). Its activity is regulated as follows. Regulated by guanine nucleotide exchange factors (GEFs) which promote the exchange of bound GDP for free GTP. Regulated by GTPase activating proteins (GAPs) including TBC1D20 which increases the GTP hydrolysis activity. Inhibited by GDP dissociation inhibitors (GDIs). The small GTPases Rab are key regulators of intracellular membrane trafficking, from the formation of transport vesicles to their fusion with membranes. Rabs cycle between an inactive GDP-bound form and an active GTP-bound form that is able to recruit to membranes different set of downstream effectors directly responsible for vesicle formation, movement, tethering and fusion. Plays a role in the initial events of the autophagic vacuole development which take place at specialized regions of the endoplasmic reticulum. Regulates vesicular transport between the endoplasmic reticulum and successive Golgi compartments. Required to modulate the compacted morphology of the Golgi. Promotes the recruitment of lipid phosphatase MTMR6 to the endoplasmic reticulum-Golgi intermediate compartment. In Mus musculus (Mouse), this protein is Ras-related protein Rab-1B (Rab1b).